Consider the following 352-residue polypeptide: C-C chemokine receptor type 5 (352 aa).

The Extracellular segment spans residues 1 to 30 (MDYQTSTPLYDIDYGMSEPCQKLNVRQIAA). A Sulfotyrosine modification is found at Tyr-3. Ser-6 is a glycosylation site (O-linked (GalNAc...) serine). 2 positions are modified to sulfotyrosine: Tyr-10 and Tyr-14. Disulfide bonds link Cys-20–Cys-269 and Cys-101–Cys-178. A helical transmembrane segment spans residues 31 to 58 (RLLPPLYSLVFIFGFVGNMLVVLILINC). Topologically, residues 59 to 68 (KKLKSMTDIY) are cytoplasmic. A helical transmembrane segment spans residues 69–89 (LLNLAISDLLFIITIPFWAHY). Residues 90–102 (AADQWVFGNTMCQ) are Extracellular-facing. The chain crosses the membrane as a helical span at residues 103–124 (LFTGFYFIGYFGGIFFIILLTI). Over 125–141 (DRYLAIVHAVFALKART) the chain is Cytoplasmic. The chain crosses the membrane as a helical span at residues 142-166 (VTFGAATSVVTWVVAVFASLPGIIF). Residues 167 to 198 (TKSQKEGSRHTCSPHFPSSQYHFWKNFQTLKI) lie on the Extracellular side of the membrane. The helical transmembrane segment at 199–218 (VILGLVLPLLVMIVCYSGII) threads the bilayer. The Cytoplasmic segment spans residues 219 to 235 (KTLLRCRNEKKKHKAVR). The helical transmembrane segment at 236-260 (LIFVIMIVYFLFWAPYNIVLLLSTF) threads the bilayer. Topologically, residues 261–277 (QEFFGLNNCSGSNRLDQ) are extracellular. A helical transmembrane segment spans residues 278–301 (AMQVTETLGMTHCCINPIIYAFVG). Over 302–352 (EKFRNYLLRFFRKYFASRFCKGCPVFQGEAPERVSSVYTRSTGEQEISVGL) the chain is Cytoplasmic. S-palmitoyl cysteine attachment occurs at residues Cys-321 and Cys-324. Phosphoserine; by BARK1 is present on residues Ser-336, Ser-337, Ser-342, and Ser-349.

This sequence belongs to the G-protein coupled receptor 1 family. In terms of assembly, interacts with PRAF2. Efficient ligand binding to CCL3/MIP-1alpha and CCL4/MIP-1beta requires sulfation, O-glycosylation and sialic acid modifications. Glycosylation on Ser-6 is required for efficient binding of CCL4. Interacts with GRK2. Interacts with ARRB1 and ARRB2. Interacts with CNIH4. Interacts with S100A4; this interaction stimulates T-lymphocyte chemotaxis. In terms of processing, sulfated on at least 2 of the N-terminal tyrosines. Sulfation is required for efficient binding of the chemokines, CCL3 and CCL4. O-glycosylated, but not N-glycosylated. Ser-6 appears to be the major site. Also sialylated glycans present which contribute to chemokine binding. Ser-17 may also be glycosylated and, if so, with small moieties such as a T-antigen. Post-translationally, palmitoylation in the C-terminal is important for cell surface expression. In terms of processing, phosphorylation on serine residues in the C-terminal is stimulated by binding CC chemokines especially by APO-RANTES.

It is found in the cell membrane. Functionally, receptor for a number of inflammatory CC-chemokines including CCL3/MIP-1-alpha, CCL4/MIP-1-beta and RANTES and subsequently transduces a signal by increasing the intracellular calcium ion level. May play a role in the control of granulocytic lineage proliferation or differentiation. Participates in T-lymphocyte migration to the infection site by acting as a chemotactic receptor. The sequence is that of C-C chemokine receptor type 5 (CCR5) from Bos taurus (Bovine).